The following is a 402-amino-acid chain: Multidrug resistance protein MdtH (402 aa).

The next 11 membrane-spanning stretches (helical) occupy residues 13 to 33 (YFLL…FPLI), 34 to 54 (SIRF…ALGL), 99 to 116 (PWVL…GTLF), 139 to 159 (ILMM…SWLL), 165 to 185 (LVCS…AWYL), 214 to 234 (VLTL…LPIM), 243 to 263 (AAVK…LYPI), 277 to 297 (LMAG…TSSL), 300 to 320 (LFTL…ARET), 340 to 360 (LGLA…FDAG), and 369 to 389 (PWLM…WQFS).

Belongs to the major facilitator superfamily. DHA1 family. MdtH (TC 2.A.1.2.21) subfamily.

The protein localises to the cell inner membrane. The polypeptide is Multidrug resistance protein MdtH (Klebsiella pneumoniae subsp. pneumoniae (strain ATCC 700721 / MGH 78578)).